The following is a 301-amino-acid chain: MDILDKLVDLAQLTGSADVQCLLGGQWSVRHETLQCEGLVHIVTAGSGYLCIDGETSPRPVGTGDIVFFPRGLGHVLSHDGKYGESLQPDIRQNGTFMVKQCGNGLDMSLFCARFRYDTHADLMNGLPETVFLNIAHPSLQYVVSMLQLESEKPLTGTVSVVNALPSVLLVLILRAYLEQDKDVELSGVLKGWQDKRLGHLIQKVIDKPEDEWNIDKMVAAANMSRAQLMRRFKSQVGLSPHAFVNHIRLQKGALLLKKTPDSVLEVALSVGFQSETHFGKAFKRQYHVSPGQYRKEGGQK.

An HTH araC/xylS-type domain is found at 196–297 (KRLGHLIQKV…HVSPGQYRKE (102 aa)). 2 DNA-binding regions (H-T-H motif) span residues 216 to 237 (DKMV…KSQV) and 264 to 287 (VLEV…KRQY).

The affinity for the mtrCDE promoter increases 2-fold in the presence of TX-100, a known effector and substrate of the MtrCDE pump. Involved in the induction of the mtrCDE-encoded efflux pump. Binds specifically to the mtrCDE promoter region. Required for high-level inducible resistance to the detergent Triton X-100 (TX-100) and the spermicide nonoxynol-9 (N-9). In Neisseria gonorrhoeae, this protein is HTH-type transcriptional regulator MtrA.